We begin with the raw amino-acid sequence, 237 residues long: uncharacterized protein (237 aa).

The a divalent metal cation site is built by glutamate 91, glutamate 93, and aspartate 122.

This sequence belongs to the FAH family.

This is an uncharacterized protein from Methanocaldococcus jannaschii (strain ATCC 43067 / DSM 2661 / JAL-1 / JCM 10045 / NBRC 100440) (Methanococcus jannaschii).